The chain runs to 1176 residues: 3-hydroxy-3-methylglutaryl-coenzyme A reductase (1176 aa).

Residues Met-1 to Pro-34 lie on the Cytoplasmic side of the membrane. Residues Ile-35 to Leu-55 form a helical membrane-spanning segment. Over Ala-56–Asn-299 the chain is Lumenal. Asn-224 and Asn-238 each carry an N-linked (GlcNAc...) asparagine glycan. The chain crosses the membrane as a helical span at residues Ile-300–Tyr-320. The SSD domain occupies Asp-301–Leu-465. Topologically, residues Val-321–Tyr-330 are cytoplasmic. Residues Thr-331–Val-351 form a helical membrane-spanning segment. The Lumenal portion of the chain corresponds to Arg-352–Gly-355. Residues Val-356–Phe-376 traverse the membrane as a helical segment. Topologically, residues Glu-377–Glu-422 are cytoplasmic. A helical transmembrane segment spans residues Ile-423 to Leu-443. Position 444 (Ser-444) is a topological domain, lumenal. A helical transmembrane segment spans residues Ala-445–Leu-465. At Lys-466–Arg-524 the chain is on the cytoplasmic side. Residues Val-525–Phe-545 form a helical membrane-spanning segment. Residues Gln-546–Pro-622 lie on the Lumenal side of the membrane. 2 N-linked (GlcNAc...) asparagine glycosylation sites follow: Asn-553 and Asn-596. Residues Val-623 to Phe-643 traverse the membrane as a helical segment. At Asn-644 to Ser-1176 the chain is on the cytoplasmic side. Positions Pro-699–Ser-724 are disordered. The segment covering Asn-700–His-721 has biased composition (basic residues). The active-site Charge relay system is Glu-841. Residue Ser-847–Lys-853 coordinates CoA. Residues Ser-907 to Phe-909 and Asp-934 to Ser-942 each bind NADP(+). The active-site Charge relay system is Lys-972. Residue Val-1001–Lys-1003 coordinates CoA. Catalysis depends on Asp-1048, which acts as the Charge relay system. Position 1145-1146 (Ala-1145–His-1146) interacts with CoA. The active-site Proton donor is the His-1146. Asn-1150–Arg-1151 serves as a coordination point for NADP(+). A disordered region spans residues Thr-1153–Ser-1176.

This sequence belongs to the HMG-CoA reductase family.

It is found in the endoplasmic reticulum membrane. The enzyme catalyses (R)-mevalonate + 2 NADP(+) + CoA = (3S)-3-hydroxy-3-methylglutaryl-CoA + 2 NADPH + 2 H(+). The protein operates within metabolic intermediate biosynthesis; (R)-mevalonate biosynthesis; (R)-mevalonate from acetyl-CoA: step 3/3. Functionally, HMG-CoA reductase; part of the first module of ergosterol biosynthesis pathway that includes the early steps of the pathway, conserved across all eukaryotes, and which results in the formation of mevalonate from acetyl-coenzyme A (acetyl-CoA). In this module, the cytosolic acetyl-CoA acetyltransferase catalyzes the formation of acetoacetyl-CoA. The hydroxymethylglutaryl-CoA synthase then condenses acetyl-CoA with acetoacetyl-CoA to form HMG-CoA. The rate-limiting step of the early module is the reduction to mevalonate by the 3-hydroxy-3-methylglutaryl-coenzyme A (HMG-CoA) reductase hmgA. The chain is 3-hydroxy-3-methylglutaryl-coenzyme A reductase from Phycomyces blakesleeanus (strain ATCC 8743b / DSM 1359 / FGSC 10004 / NBRC 33097 / NRRL 1555).